Here is a 305-residue protein sequence, read N- to C-terminus: tRNA pseudouridine synthase B (305 aa).

The active-site Nucleophile is the aspartate 48.

This sequence belongs to the pseudouridine synthase TruB family. Type 1 subfamily.

The catalysed reaction is uridine(55) in tRNA = pseudouridine(55) in tRNA. In terms of biological role, responsible for synthesis of pseudouridine from uracil-55 in the psi GC loop of transfer RNAs. The protein is tRNA pseudouridine synthase B of Pseudomonas fluorescens (strain ATCC BAA-477 / NRRL B-23932 / Pf-5).